The following is a 160-amino-acid chain: NADH-quinone oxidoreductase subunit I (160 aa).

4Fe-4S ferredoxin-type domains are found at residues leucine 51–alanine 81 and valine 91–asparagine 120. Residues cysteine 61, cysteine 64, cysteine 67, cysteine 71, cysteine 100, cysteine 103, cysteine 106, and cysteine 110 each contribute to the [4Fe-4S] cluster site.

The protein belongs to the complex I 23 kDa subunit family. NDH-1 is composed of 14 different subunits. Subunits NuoA, H, J, K, L, M, N constitute the membrane sector of the complex. It depends on [4Fe-4S] cluster as a cofactor.

Its subcellular location is the cell inner membrane. The catalysed reaction is a quinone + NADH + 5 H(+)(in) = a quinol + NAD(+) + 4 H(+)(out). Its function is as follows. NDH-1 shuttles electrons from NADH, via FMN and iron-sulfur (Fe-S) centers, to quinones in the respiratory chain. The immediate electron acceptor for the enzyme in this species is believed to be ubiquinone. Couples the redox reaction to proton translocation (for every two electrons transferred, four hydrogen ions are translocated across the cytoplasmic membrane), and thus conserves the redox energy in a proton gradient. This chain is NADH-quinone oxidoreductase subunit I, found in Anaplasma marginale (strain St. Maries).